Here is an 87-residue protein sequence, read N- to C-terminus: Potassium channel toxin TsTXK-beta/Cryptide TyPep-16 (87 aa).

Positions 1–19 (MERKLALLLILGMVTLASC) are cleaved as a signal peptide. Residues 53–87 (QFGCPAYEGYCNDHCNDIERKDGECHGFKCKCAKD) form the BetaSPN-type CS-alpha/beta domain. Intrachain disulfides connect Cys56/Cys77, Cys63/Cys82, and Cys67/Cys84.

Belongs to the long chain scorpion toxin family. Class 1 subfamily. In terms of tissue distribution, expressed by the venom gland.

The protein localises to the secreted. Its function is as follows. Specifically blocks voltage-gated potassium channels Kv4.2/KCND2. When measured at the peak current, the blocking effect of this toxin is about 65% and shows an IC(50)=652 nM. However, when measured at a later moment of the depolarising test pulse (500 ms), a 100% block of the current is observed with an IC(50)=313 nM. This may indicate a preference of the toxin for binding the inactivated state of the channel. The inhibition is completely reversible. In vivo, intraplantar injection into rat paw induces overt nociception (licking and lifting behaviors) and decreases the mechanical nociceptive threshold (hyperalgesia). Furthermore, the hyperalgesia is prolonged when intrathecal injections are performed. In terms of biological role, induces discomfort and anxiety in mice, as it moderately diminishes locomotion (but has no effect on rearing behavior). Does not cause hemolysis, mast cell degranulation, LDH release, and does not have antimicrobial activity. Does not cause edema and pain. Functionally, does not induce hemolytic activity, lactate dehydrogenase (LDH) release from mast cells, mast cell degranulation, and antimicrobial effects. In vivo, injection into mice causes moderate edema formation, but induces very weak or no change in nociceptive sensibility. It also reduces mice locomotion, suggesting an increase in anxiety, but causes no alteration in rearing (standing on hind limbs). In Tityus serrulatus (Brazilian scorpion), this protein is Potassium channel toxin TsTXK-beta/Cryptide TyPep-16.